A 466-amino-acid polypeptide reads, in one-letter code: Citrate synthase, mitochondrial (466 aa).

Residues 1 to 27 (MALLTAAARLFGAKNASCLVLAARHAS) constitute a mitochondrion transit peptide. The short motif at 2 to 21 (ALLTAAARLFGAKNASCLVL) is the SIFI-degron element. K57 is modified (N6-succinyllysine). K76 carries the N6-acetyllysine; alternate modification. K76 is modified (N6-succinyllysine; alternate). Residues K103 and K193 each carry the N6-succinyllysine modification. S226 carries the phosphoserine modification. The active site involves H301. N6-acetyllysine; alternate is present on residues K321 and K327. N6-succinyllysine; alternate occurs at positions 321 and 327. Residue H347 is part of the active site. R356 provides a ligand contact to oxaloacetate. K375 is modified (N6-acetyllysine; alternate). An N6-succinyllysine; alternate modification is found at K375. Position 382 is an N6-acetyllysine (K382). N6-acetyllysine; alternate is present on K393. K393 is modified (N6-succinyllysine; alternate). N6,N6,N6-trimethyllysine is present on K395. D402 is a catalytic residue. Residues R428 and R448 each contribute to the oxaloacetate site. At K450 the chain carries N6-succinyllysine. K459 is modified (N6-acetyllysine; alternate). K459 carries the N6-succinyllysine; alternate modification.

This sequence belongs to the citrate synthase family. In terms of assembly, homodimer. Methylated. Trimethylation at Lys-395 by CSKMT decreases citrate synthase activity. In terms of processing, in response to mitochondrial stress, the precursor protein is ubiquitinated by the SIFI complex in the cytoplasm before mitochondrial import, leading to its degradation. Within the SIFI complex, UBR4 initiates ubiquitin chain that are further elongated or branched by KCMF1.

The protein resides in the mitochondrion matrix. It catalyses the reaction oxaloacetate + acetyl-CoA + H2O = citrate + CoA + H(+). The protein operates within carbohydrate metabolism; tricarboxylic acid cycle; isocitrate from oxaloacetate: step 1/2. Key enzyme of the Krebs tricarboxylic acid cycle which catalyzes the synthesis of citrate from acetyl coenzyme A and oxaloacetate. This Bos taurus (Bovine) protein is Citrate synthase, mitochondrial (CS).